Reading from the N-terminus, the 883-residue chain is Probable pre-mRNA-splicing factor ATP-dependent RNA helicase DEAH8 (883 aa).

The Helicase ATP-binding domain occupies 232 to 395 (LKLIEENQVL…FDSARIYLIP (164 aa)). 245 to 252 (GETGSGKT) provides a ligand contact to ATP. Positions 342-345 (DEAH) match the DEAH box motif. Residues 416-589 (TVIRTVVQIH…SVVLTLKSLG (174 aa)) form the Helicase C-terminal domain. The interval 845–883 (EDTRPKKTQRRIEEASTSKVDTNKKTRTSKVDTNKKSKR) is disordered.

The protein belongs to the DEAD box helicase family. DEAH subfamily. PRP2 sub-subfamily. In terms of tissue distribution, predominantly expressed in flowers.

It catalyses the reaction ATP + H2O = ADP + phosphate + H(+). In terms of biological role, may be involved in pre-mRNA splicing. The polypeptide is Probable pre-mRNA-splicing factor ATP-dependent RNA helicase DEAH8 (Arabidopsis thaliana (Mouse-ear cress)).